We begin with the raw amino-acid sequence, 73 residues long: U-scoloptoxin(15)-Sm3a (73 aa).

The N-terminal stretch at 1-23 is a signal peptide; sequence MERKVFLLLFVIVLLTLPGFMSA.

The protein belongs to the scoloptoxin-15 family. Post-translationally, contains 2 disulfide bonds. Expressed by the venom gland.

Its subcellular location is the secreted. This is U-scoloptoxin(15)-Sm3a from Scolopendra morsitans (Tanzanian blue ringleg centipede).